Reading from the N-terminus, the 267-residue chain is Low affinity immunoglobulin gamma Fc region receptor III (267 aa).

An N-terminal signal peptide occupies residues 1–36; that stretch reads MTLETQMFQNAHSGSQWLLPPLTMLLLFAFADRQTA. Residues 37–221 are Extracellular-facing; it reads NLPKAVVKRD…STSSLVWFHA (185 aa). 2 Ig-like C2-type domains span residues 39 to 121 and 122 to 204; these read PKAV…EVIS and DWLL…VTIT. Cystine bridges form between C62/C104 and C143/C187. 5 N-linked (GlcNAc...) asparagine glycosylation sites follow: N70, N78, N97, N171, and N178. Residues 222–241 form a helical membrane-spanning segment; that stretch reads AFCLVMCLLFAVDTGLYFCV. Residues 242-267 lie on the Cytoplasmic side of the membrane; that stretch reads RRNLQTSGEDWRKSLSVGKYKAPQDK.

As to quaternary structure, may form multisubunit complex with other heteroproteins. This association is required for efficient cell-surface expression. Does not associate with CD3 zeta. As to expression, expressed on natural killer cells and macrophages.

It is found in the cell membrane. Its function is as follows. Receptor for the Fc region of complexed immunoglobulins gamma. Low affinity receptor which binds to IgG1, IgG2a and IgG2b. Mediates neutrophil activation by IgG complexes redundantly with Fcgr4. This Rattus norvegicus (Rat) protein is Low affinity immunoglobulin gamma Fc region receptor III (Fcgr3).